Here is a 384-residue protein sequence, read N- to C-terminus: Transcription factor 7 (384 aa).

The span at 1–16 shows a compositional bias: gly residues; that stretch reads MPQLDSGGGGAGGGDD. Positions 1-59 are CTNNB1-binding; it reads MPQLDSGGGGAGGGDDLGAPDELLAFQDEGEEQDDKSRDSAAGPERDLAELKSSLVNES. Disordered stretches follow at residues 1 to 88, 133 to 183, and 337 to 384; these read MPQL…LGRE, PPSG…QKQV, and SARD…MTVL. Positions 35–50 are enriched in basic and acidic residues; that stretch reads DKSRDSAAGPERDLAE. Positions 62–78 are enriched in gly residues; the sequence is AAGGAGIPGVPGAGAGA. Residues 269-337 constitute a DNA-binding region (HMG box); that stretch reads IKKPLNAFML…LHMQLYPGWS (69 aa). The short motif at 344 to 348 is the Nuclear localization signal element; the sequence is KKKRR. The segment covering 352-370 has biased composition (basic and acidic residues); that stretch reads KHQESTTGGKRNAFGTYPE. Over residues 374–384 the composition is skewed to low complexity; it reads APAPFLPMTVL.

The protein belongs to the TCF/LEF family. Binds the armadillo repeat of CTNNB1 and forms a stable complex. Interacts with TLE5, TLE1, TLE2, TLE3 and TLE4. Interacts with MLLT11. Long isoform interacts (via N-terminus) with SOX13; inhibits WNT-mediated transcriptional activity. Interacts with DAZAP2. As to expression, predominantly expressed in T-cells. Also detected in proliferating intestinal epithelial cells and in the basal epithelial cells of mammary gland epithelium.

It is found in the nucleus. In terms of biological role, transcriptional activator involved in T-cell lymphocyte differentiation. Necessary for the survival of CD4(+) CD8(+) immature thymocytes. Isoforms lacking the N-terminal CTNNB1 binding domain cannot fulfill this role. Binds to the T-lymphocyte-specific enhancer element (5'-WWCAAAG-3') found in the promoter of the CD3E gene. Represses expression of the T-cell receptor gamma gene in alpha-beta T-cell lineages. Required for the development of natural killer receptor-positive lymphoid tissue inducer T-cells. TLE1, TLE2, TLE3 and TLE4 repress transactivation mediated by TCF7 and CTNNB1. May also act as feedback transcriptional repressor of CTNNB1 and TCF7L2 target genes. The sequence is that of Transcription factor 7 from Homo sapiens (Human).